The sequence spans 593 residues: Salivary alpha-glucosidase (593 aa).

The N-terminal stretch at Met1–Gly19 is a signal peptide. Ca(2+) contacts are provided by Asp49, Asp51, Asp53, Ile55, Asp57, and Asn130. N-linked (GlcNAc...) asparagine glycans are attached at residues Asn130 and Asn163. Residues Asp201, Tyr235, Leu236, and Glu238 each contribute to the Ca(2+) site. 6 N-linked (GlcNAc...) asparagine glycosylation sites follow: Asn295, Asn310, Asn338, Asn414, Asn445, and Asn453. Asn338 contributes to the N-acetyl-beta-D-glucosamine binding site.

It belongs to the glycosyl hydrolase 13 family. In terms of tissue distribution, saliva (at protein level). Proximal lateral lobes of the salivary gland (at protein level).

The protein resides in the secreted. It catalyses the reaction Hydrolysis of terminal, non-reducing (1-&gt;4)-linked alpha-D-glucose residues with release of alpha-D-glucose.. In terms of biological role, functions as a glucosidase that shows high activity toward sucrose, a major component of nectar. Assists the mosquito in its sugar-feeding capabilities. The protein is Salivary alpha-glucosidase of Anopheles gambiae (African malaria mosquito).